The chain runs to 205 residues: Phosphoribosyl-dephospho-CoA transferase (205 aa).

Active-site residues include Asp134 and Asp136.

The protein belongs to the MdcG family.

The enzyme catalyses apo-[malonate decarboxylase ACP] + 2'-(5''-triphospho-alpha-D-ribosyl)-3'-dephospho-CoA = holo-[malonate decarboxylase ACP] + diphosphate. Functionally, transfers 2'-(5-triphosphoribosyl)-3'-dephosphocoenzyme-A to the apo-[acyl-carrier-protein] of the malonate decarboxylase to yield holo-[acyl-carrier-protein]. This Klebsiella pneumoniae (strain 342) protein is Phosphoribosyl-dephospho-CoA transferase.